We begin with the raw amino-acid sequence, 220 residues long: Uracil-DNA glycosylase (220 aa).

Asp-65 functions as the Proton acceptor in the catalytic mechanism.

This sequence belongs to the uracil-DNA glycosylase (UDG) superfamily. UNG family.

The protein localises to the cytoplasm. It carries out the reaction Hydrolyzes single-stranded DNA or mismatched double-stranded DNA and polynucleotides, releasing free uracil.. Excises uracil residues from the DNA which can arise as a result of misincorporation of dUMP residues by DNA polymerase or due to deamination of cytosine. This chain is Uracil-DNA glycosylase, found in Leuconostoc mesenteroides subsp. mesenteroides (strain ATCC 8293 / DSM 20343 / BCRC 11652 / CCM 1803 / JCM 6124 / NCDO 523 / NBRC 100496 / NCIMB 8023 / NCTC 12954 / NRRL B-1118 / 37Y).